Here is a 121-residue protein sequence, read N- to C-terminus: Large ribosomal subunit protein eL18 (121 aa).

It belongs to the eukaryotic ribosomal protein eL18 family.

The polypeptide is Large ribosomal subunit protein eL18 (Methanothermobacter thermautotrophicus (strain ATCC 29096 / DSM 1053 / JCM 10044 / NBRC 100330 / Delta H) (Methanobacterium thermoautotrophicum)).